We begin with the raw amino-acid sequence, 313 residues long: D-alanine--D-alanine ligase (313 aa).

In terms of domain architecture, ATP-grasp spans 108 to 308 (KLVWQQTGVP…YSELVVKVLS (201 aa)). Position 138 to 193 (138 to 193 (VAKLGLPLFVKPASEGSSVAVLKVKTADALPAALAEAATHDKIVIVEKSIEGGGEY)) interacts with ATP. Residues Asp262, Glu275, and Asn277 each coordinate Mg(2+).

This sequence belongs to the D-alanine--D-alanine ligase family. Mg(2+) serves as cofactor. The cofactor is Mn(2+).

It is found in the cytoplasm. The catalysed reaction is 2 D-alanine + ATP = D-alanyl-D-alanine + ADP + phosphate + H(+). It participates in cell wall biogenesis; peptidoglycan biosynthesis. Its function is as follows. Cell wall formation. In Burkholderia orbicola (strain MC0-3), this protein is D-alanine--D-alanine ligase.